The primary structure comprises 585 residues: MAKTTPMAKPSVGLLTLQVLVFCALTGSLASAGSIGHVTPRSDLCDSEVYCQGELLKTIQLGEVFKDGKTFVDHYQVNDPSVTVANFRKLMAETGGKPNKDQLTQYVKENFAQENEVIDWSPPDWQENPEFLQRVQDPVFRKWAKDLNDVWKIISRKVAPSVAEHPERHSIISVDNGFIVPGGRFQEFYYWDSYWVMEGLLLTGMKNTSRGILENFLSMVTRFGFIPNGGRVYYLMRSQPPLLIPMVDLYLTHTGDMQFLRDNIGTLEKELGYFLSQKTVDVTKNGKTYKMARYIVSSNGPRPESYREDYELAKNINDEAEKRRFYEDLKAAAESGWDFSSRWYISENGTRGSLSNIATRNIIPVELNAFLQRNARMLAQFHTTLGNPTKAKYYKDIATSYQQAIDDVLWSESEGVWLDFDLRNSQHRNYFFPTNVAPLYTQSFDSSKAQIYGQRAAAYLTRNGILDYMGGTPASLFPTGEQWDLPNAWPPLQSIIVQALRNSNEESAEKLAKELAIRWLRANHKGYSQSGQMFEKYDALNPGKFGGGGEYVVQEGFGWTNGVVYEFLNSYPNATPDDNVHMNNN.

Positions 1 to 32 are cleaved as a signal peptide; it reads MAKTTPMAKPSVGLLTLQVLVFCALTGSLASA. Substrate contacts are provided by residues R184 and 191–192; that span reads WD. N207 is a glycosylation site (N-linked (GlcNAc...) asparagine). Substrate-binding positions include N228, 237-239, 302-304, and G336; these read RSQ and RPE. The active-site Proton donor/acceptor is the D338. N348 carries N-linked (GlcNAc...) asparagine glycosylation. Residue E535 is the Proton donor/acceptor of the active site. E550 serves as a coordination point for substrate.

This sequence belongs to the glycosyl hydrolase 37 family. Expressed by the venom gland.

Its subcellular location is the secreted. It carries out the reaction alpha,alpha-trehalose + H2O = alpha-D-glucose + beta-D-glucose. The polypeptide is Trehalase (tre1) (Pimpla hypochondriaca (Parasitoid wasp)).